A 166-amino-acid polypeptide reads, in one-letter code: Crossover junction endodeoxyribonuclease RuvC (166 aa).

Active-site residues include D11, E70, and D142. Residues D11, E70, and D142 each coordinate Mg(2+).

This sequence belongs to the RuvC family. Homodimer which binds Holliday junction (HJ) DNA. The HJ becomes 2-fold symmetrical on binding to RuvC with unstacked arms; it has a different conformation from HJ DNA in complex with RuvA. In the full resolvosome a probable DNA-RuvA(4)-RuvB(12)-RuvC(2) complex forms which resolves the HJ. Mg(2+) serves as cofactor.

It is found in the cytoplasm. The enzyme catalyses Endonucleolytic cleavage at a junction such as a reciprocal single-stranded crossover between two homologous DNA duplexes (Holliday junction).. In terms of biological role, the RuvA-RuvB-RuvC complex processes Holliday junction (HJ) DNA during genetic recombination and DNA repair. Endonuclease that resolves HJ intermediates. Cleaves cruciform DNA by making single-stranded nicks across the HJ at symmetrical positions within the homologous arms, yielding a 5'-phosphate and a 3'-hydroxyl group; requires a central core of homology in the junction. The consensus cleavage sequence is 5'-(A/T)TT(C/G)-3'. Cleavage occurs on the 3'-side of the TT dinucleotide at the point of strand exchange. HJ branch migration catalyzed by RuvA-RuvB allows RuvC to scan DNA until it finds its consensus sequence, where it cleaves and resolves the cruciform DNA. The polypeptide is Crossover junction endodeoxyribonuclease RuvC (Nitratidesulfovibrio vulgaris (strain DP4) (Desulfovibrio vulgaris)).